The following is a 490-amino-acid chain: uncharacterized protein (490 aa).

The N-terminal stretch at 1–19 (MSITSVSLYVYLICAGGHA) is a signal peptide.

This sequence belongs to the mimivirus L137 family.

This is an uncharacterized protein from Acanthamoeba polyphaga (Amoeba).